The primary structure comprises 681 residues: Type VI secretion system spike protein VgrG2 (681 aa).

The interval 284–309 (AVAGSGKSNSSALQPGQTFSLTEHPN) is disordered. Over residues 289 to 309 (GKSNSSALQPGQTFSLTEHPN) the composition is skewed to polar residues.

It belongs to the VgrG protein family.

Functionally, part of the type VI secretion system specialized secretion system, which delivers several virulence factors in both prokaryotic and eukaryotic cells during infection. Plays an essential role in bacterial mobility and biofilm formation. The polypeptide is Type VI secretion system spike protein VgrG2 (Aeromonas hydrophila).